Consider the following 311-residue polypeptide: Transmembrane protein DDB_G0273707/DDB_G0273361 (311 aa).

Residues 1 to 113 are disordered; that stretch reads MNEIEVDNLS…NNNNNKNENN (113 aa). Asn8 is a glycosylation site (N-linked (GlcNAc...) asparagine). Residues 9–18 are compositionally biased toward polar residues; sequence LSHTNKNVAT. Asn35, Asn38, Asn62, and Asn76 each carry an N-linked (GlcNAc...) asparagine glycan. 2 stretches are compositionally biased toward low complexity: residues 37-67 and 76-111; these read SNNS…SNSN and NNSN…NKNE. Positions 95 to 124 form a coiled coil; sequence NNNNNNNNNNNNNNKNENNNKIKNEKINIL. The next 5 helical transmembrane spans lie at 150–170, 181–201, 208–228, 235–255, and 276–296; these read LEEI…LALL, IFLL…PKSP, LVLG…ALVY, VACA…KSIH, and FYYI…TALI.

The protein localises to the membrane. This is Transmembrane protein DDB_G0273707/DDB_G0273361 from Dictyostelium discoideum (Social amoeba).